We begin with the raw amino-acid sequence, 386 residues long: DNA dC-&gt;dU-editing enzyme APOBEC-3D (386 aa).

2 CMP/dCMP-type deaminase domains span residues 29–145 and 187–334; these read GRSY…DWRW and DDNY…LCSL. Zn(2+) is bound by residues H78, C109, C112, and H262. Residue E264 is the Proton donor of the active site. Zn(2+) contacts are provided by C293 and C296.

This sequence belongs to the cytidine and deoxycytidylate deaminase family. As to quaternary structure, can form homo- and heterodimers with APOBEC3F and APOBEC3G. Interacts with L1RE1; this interaction inhibits LINE-1 retrotransposition. In terms of assembly, (Microbial infection) Interacts with HIV-1 Vif. This interaction triggers APOBEC3D polyubiquitylation and degradation by the 26S proteasome. The cofactor is Zn(2+). In terms of tissue distribution, expressed in lymphoid organs. Also detected in non-lymphoid tissues including lung.

The protein localises to the cytoplasm. The protein resides in the P-body. The catalysed reaction is a 2'-deoxycytidine in single-stranded DNA + H2O + H(+) = a 2'-deoxyuridine in single-stranded DNA + NH4(+). With respect to regulation, (Microbial infection) Antiviral activity is neutralized by the HIV-1 virion infectivity factor (Vif), that prevents its incorporation into progeny virions by both inhibiting its translation and/or by inducing its ubiquitination and subsequent degradation by the 26S proteasome. DNA deaminase (cytidine deaminase) which acts as an inhibitor of retrovirus replication and retrotransposon mobility via deaminase-dependent and -independent mechanisms. Exhibits antiviral activity against HIV-1. After the penetration of retroviral nucleocapsids into target cells of infection and the initiation of reverse transcription, it can induce the conversion of cytosine to uracil in the minus-sense single-strand viral DNA, leading to G-to-A hypermutations in the subsequent plus-strand viral DNA. The resultant detrimental levels of mutations in the proviral genome, along with a deamination-independent mechanism that works prior to the proviral integration, together exert efficient antiretroviral effects in infected target cells. Selectively targets single-stranded DNA and does not deaminate double-stranded DNA or single- or double-stranded RNA. Also inhibits the mobility of LTR and non-LTR retrotransposons. Functionally, (Microbial infection) Enhances hepatitis B virus/HBV replication by excluding restriction factors APOBEC3F and APOBEC3G from HBV capsids. The protein is DNA dC-&gt;dU-editing enzyme APOBEC-3D of Homo sapiens (Human).